The sequence spans 139 residues: UPF0310 protein RSal33209_2865 (139 aa).

It belongs to the UPF0310 family.

The chain is UPF0310 protein RSal33209_2865 from Renibacterium salmoninarum (strain ATCC 33209 / DSM 20767 / JCM 11484 / NBRC 15589 / NCIMB 2235).